The sequence spans 152 residues: Protein SprT-like (152 aa).

The SprT-like domain occupies 7 to 147 (QRLVEEVSLQ…CGKCKGKLKP (141 aa)). His67 serves as a coordination point for Zn(2+). The active site involves Glu68. His71 contacts Zn(2+).

It belongs to the SprT family. Requires Zn(2+) as cofactor.

It localises to the cytoplasm. This Bacillus cereus (strain G9842) protein is Protein SprT-like.